The sequence spans 526 residues: Cytochrome P450 monooxygenase COX2 (526 aa).

The N-linked (GlcNAc...) asparagine glycan is linked to Asn11. The chain crosses the membrane as a helical span at residues 12 to 31; it reads ITTNHVAAAVCAGIAVYAIV. Asn302 is a glycosylation site (N-linked (GlcNAc...) asparagine). Position 450 (Cys450) interacts with heme.

Belongs to the cytochrome P450 family. Heme is required as a cofactor.

Its subcellular location is the membrane. It functions in the pathway secondary metabolite biosynthesis. Its function is as follows. Cytochrome P450 monooxygenase; part of the gene cluster that mediates the biosynthesis of alpha-cuprenene and oxidized derivatives. The alpha-cuprenene synthase COP6 is the only sesquiterpene synthase identified in C.cinereus that appears to be part of a biosynthetic gene cluster and is highly specific since it catalyzes the cyclization of (2E,6E)-farnesyl diphosphate into only one product, alpha-cuprenene. The cytochrome P450 monooxygenase COX2 then oxidizes the cyclohexadiene ring of alpha-cuprenene at positions 1 and 4, yielding first alpha-cuparene, followed by alpha-cuparophenol and a further yet unidentified compound resulting from one additional oxidation step. The cytochrome P450 monooxygenase COX1 then likely catalyzes the oxidation at position 9 of the pentane ring of alpha-cuprenene to give the corresponding hydroxy or ketone derivatives. The polypeptide is Cytochrome P450 monooxygenase COX2 (Coprinopsis cinerea (strain Okayama-7 / 130 / ATCC MYA-4618 / FGSC 9003) (Inky cap fungus)).